Reading from the N-terminus, the 216-residue chain is Ribosomal RNA small subunit methyltransferase G (216 aa).

S-adenosyl-L-methionine contacts are provided by residues Gly-86, Leu-91, Val-137–Glu-138, and Arg-155.

It belongs to the methyltransferase superfamily. RNA methyltransferase RsmG family.

Its subcellular location is the cytoplasm. It carries out the reaction guanosine(527) in 16S rRNA + S-adenosyl-L-methionine = N(7)-methylguanosine(527) in 16S rRNA + S-adenosyl-L-homocysteine. Its function is as follows. Specifically methylates the N7 position of guanine in position 527 of 16S rRNA. The polypeptide is Ribosomal RNA small subunit methyltransferase G (Lawsonia intracellularis (strain PHE/MN1-00)).